A 302-amino-acid chain; its full sequence is 33 kDa chaperonin (302 aa).

2 disulfide bridges follow: C234-C236 and C267-C270.

This sequence belongs to the HSP33 family. Post-translationally, under oxidizing conditions two disulfide bonds are formed involving the reactive cysteines. Under reducing conditions zinc is bound to the reactive cysteines and the protein is inactive.

It is found in the cytoplasm. Functionally, redox regulated molecular chaperone. Protects both thermally unfolding and oxidatively damaged proteins from irreversible aggregation. Plays an important role in the bacterial defense system toward oxidative stress. The polypeptide is 33 kDa chaperonin (Neisseria gonorrhoeae (strain ATCC 700825 / FA 1090)).